Consider the following 554-residue polypeptide: Bifunctional epoxide hydrolase 2 (554 aa).

A phosphatase region spans residues 1-224; it reads MALRVAAFDL…KVTGTQFPEA (224 aa). Aspartate 9 and aspartate 11 together coordinate Mg(2+). Lysine 55 is subject to N6-succinyllysine. Residue 123-124 participates in phosphate binding; that stretch reads TN. Lysine 176 carries the N6-acetyllysine; alternate modification. Lysine 176 carries the N6-succinyllysine; alternate modification. A Mg(2+)-binding site is contributed by aspartate 185. Lysine 191 and lysine 215 each carry N6-acetyllysine. The segment at 233-554 is epoxide hydrolase; sequence NDVSHGYVTV…VQNPSVTSKI (322 aa). Residues 257 to 530 form the AB hydrolase-1 domain; sequence PALCLCHGFP…CGHWTQIEKP (274 aa). The Nucleophile role is filled by aspartate 333. Serine 368 is modified (phosphoserine). Lysine 371 is modified (N6-succinyllysine). Tyrosine 381 lines the substrate pocket. An N6-succinyllysine mark is found at lysine 420 and lysine 454. Catalysis depends on tyrosine 465, which acts as the Proton donor. At lysine 504 the chain carries N6-succinyllysine. Lysine 508 carries the N6-acetyllysine; alternate modification. The residue at position 508 (lysine 508) is an N6-succinyllysine; alternate. Cysteine 521 carries S-(15-deoxy-Delta12,14-prostaglandin J2-9-yl)cysteine lipidation. The active-site Proton acceptor is the histidine 523. The Microbody targeting signal signature appears at 552–554; the sequence is SKI. Lysine 553 bears the N6-succinyllysine mark.

It belongs to the AB hydrolase superfamily. Epoxide hydrolase family. In terms of assembly, homodimer. The cofactor is Mg(2+). The N-terminus is blocked. In terms of processing, the covalent modification of cysteine by 15-deoxy-Delta12,14-prostaglandin-J2 is autocatalytic and reversible. It may occur as an alternative to other cysteine modifications, such as S-nitrosylation and S-palmitoylation. As to expression, detected in liver, intestine, ovary and kidney. Detected at low levels in heart and muscle.

Its subcellular location is the cytoplasm. It is found in the peroxisome. It carries out the reaction an epoxide + H2O = an ethanediol. The enzyme catalyses (9S,10S)-10-hydroxy-9-(phosphooxy)octadecanoate + H2O = (9S,10S)-9,10-dihydroxyoctadecanoate + phosphate. The catalysed reaction is 8-hydroxy-(11S,12S)-epoxy-(5Z,9E,14Z)-eicosatrienoate + H2O = (8,11R,12S)-trihydroxy-(5Z,9E,14Z)-eicosatrienoate. It catalyses the reaction 10-hydroxy-(11S,12S)-epoxy- (5Z,8Z,14Z)-eicosatrienoate + H2O = (10,11S,12R)-trihydroxy-(5Z,8Z,14Z)-eicosatrienoate. It carries out the reaction (8S,9R)-epoxy-(5Z,11Z,14Z)-eicosatrienoate + H2O = (8S,9S)-dihydroxy-(5Z,11Z,14Z)-eicosatrienoate. The enzyme catalyses (11S,12R)-epoxy-(5Z,8Z,14Z)-eicosatrienoate + H2O = (11R,12R)-dihydroxy-(5Z,8Z,14Z)-eicosatrienoate. The catalysed reaction is (11S,12R)-epoxy-(5Z,8Z,14Z)-eicosatrienoate + H2O = (11S,12S)-dihydroxy-(5Z,8Z,14Z)-eicosatrienoate. It catalyses the reaction (14S,15R)-epoxy-(5Z,8Z,11Z)-eicosatrienoate + H2O = (14R,15R)-dihydroxy-(5Z,8Z,11Z)-eicosatrienoate. It carries out the reaction (14S,15R)-epoxy-(5Z,8Z,11Z)-eicosatrienoate + H2O = (14S,15S)-dihydroxy-(5Z,8Z,11Z)-eicosatrienoate. The enzyme catalyses (11R,12S)-epoxy-(5Z,8Z,14Z)-eicosatrienoate + H2O = (11S,12S)-dihydroxy-(5Z,8Z,14Z)-eicosatrienoate. The catalysed reaction is (11R,12S)-epoxy-(5Z,8Z,14Z)-eicosatrienoate + H2O = (11R,12R)-dihydroxy-(5Z,8Z,14Z)-eicosatrienoate. It catalyses the reaction (8S,9R)-epoxy-(5Z,11Z,14Z)-eicosatrienoate + H2O = (8R,9R)-dihydroxy-(5Z,11Z,14Z)-eicosatrienoate. It carries out the reaction 12-phosphooxy-(9Z)-octadecenoate + H2O = 12-hydroxy-(9Z)-octadecenoate + phosphate. The enzyme catalyses 12-phosphooxy-(9E)-octadecenoate + H2O = 12-hydroxy-(9E)-octadecenoate + phosphate. The catalysed reaction is 12-(phosphooxy)octadecanoate + H2O = 12-hydroxyoctadecanoate + phosphate. It catalyses the reaction 8,9-epoxy-(5Z,11Z,14Z)-eicosatrienoate + H2O = 8,9-dihydroxy-(5Z,11Z,14Z)-eicosatrienoate. It carries out the reaction 11,12-epoxy-(5Z,8Z,14Z)-eicosatrienoate + H2O = 11,12-dihydroxy-(5Z,8Z,14Z)-eicosatrienoate. The enzyme catalyses 14,15-epoxy-(5Z,8Z,11Z)-eicosatrienoate + H2O = 14,15-dihydroxy-(5Z,8Z,11Z)-eicosatrienoate. The catalysed reaction is 9,10-epoxy-(12Z)-octadecenoate + H2O = 9,10-dihydroxy-(12Z)-octadecenoate. It catalyses the reaction 1-tetradecanoyl-sn-glycerol 3-phosphate + H2O = 1-tetradecanoyl-sn-glycerol + phosphate. It carries out the reaction 1-octadecanoyl-sn-glycero-3-phosphate + H2O = 1-octadecanoyl-sn-glycerol + phosphate. The enzyme catalyses 1-(5Z,8Z,11Z,14Z-eicosatetraenoyl)-sn-glycero-3-phosphate + H2O = 1-(5Z,8Z,11Z,14Z-eicosatetraenoyl)-sn-glycerol + phosphate. The catalysed reaction is 1-hexadecanoyl-sn-glycero-3-phosphate + H2O = 1-hexadecanoyl-sn-glycerol + phosphate. It catalyses the reaction 1-(9Z-octadecenoyl)-sn-glycero-3-phosphate + H2O = 1-(9Z-octadecenoyl)-sn-glycerol + phosphate. It carries out the reaction (14R,15S)-epoxy-(5Z,8Z,11Z)-eicosatrienoate + H2O = (14R,15R)-dihydroxy-(5Z,8Z,11Z)-eicosatrienoate. Inhibited by 1-(1-acetylpiperidin-4-yl)-3-(4-(trifl uoromethoxy)phenyl)urea (TPAU), 1-cyclohexyl-3-dodecylurea (CDU), 12-(3-adamantan-1-yl-ureido)-dodecanoic acid (AUDA), 1-((3S, 5S, 7S)-adamantan-1-yl)-3-(5-(2-(2-ethoxyethoxy) ethoxy)pentyl)urea (AEPU), N-adamantyl-N[']-cyclohexyl urea (ACU), 4-(((1S, 4S)-4-(3-((3S, 5S, 7S)-adamantan-1-yl) ureido)cyclohexyl)oxy)benzoic acid (c-AUCB), 4-(((1R, 4R)-4-(3-((3S, 5S, 7S)-adamantan-1-yl)ureido)cyclohexyl)oxy)benzoic acid (t-AUCB), 4-(((1R, 4R)-4-(3-(4(trifluoromethoxy)phenyl)ureido)cyclohexyl)oxy)benzoic acid (t-TAUCB) and to a lesser extent by 8-(3-((3S, 5S, 7S)-adamantan-1-yl)ureido) octanoic acid (AUOA). Phosphatase activity is inhibited by dodecyl-phosphate, phospholipids such as phospho-lysophosphatidic acids and fatty acids such as palmitic acid and lauric acid. Bifunctional enzyme. The C-terminal domain has epoxide hydrolase activity and acts on epoxides (alkene oxides, oxiranes) and arene oxides. Plays a role in xenobiotic metabolism by degrading potentially toxic epoxides. Also determines steady-state levels of physiological mediators. In terms of biological role, bifunctional enzyme. The N-terminal domain has lipid phosphatase activity, with the highest activity towards threo-9,10-phosphonooxy-hydroxy-octadecanoic acid, followed by erythro-9,10-phosphonooxy-hydroxy-octadecanoic acid, 12-phosphonooxy-octadec-9Z-enoic acid and 12-phosphonooxy-octadec-9E-enoic acid. Has phosphatase activity toward lyso-glycerophospholipids with also some lower activity toward lysolipids of sphingolipid and isoprenoid phosphates. The protein is Bifunctional epoxide hydrolase 2 of Mus musculus (Mouse).